The sequence spans 366 residues: Carbamoyl phosphate synthase small chain (366 aa).

The segment at 1–171 (MLERRYLVLE…KTPYVSTGSD (171 aa)) is CPSase. Positions 47, 221, and 223 each coordinate L-glutamine. The 188-residue stretch at 173-360 (SVVLLDFGKK…MTMMKEFKEK (188 aa)) folds into the Glutamine amidotransferase type-1 domain. The active-site Nucleophile is the Cys-248. 5 residues coordinate L-glutamine: Leu-249, Gln-252, Asn-290, Gly-292, and Tyr-293. Residues His-333 and Glu-335 contribute to the active site.

This sequence belongs to the CarA family. In terms of assembly, composed of two chains; the small (or glutamine) chain promotes the hydrolysis of glutamine to ammonia, which is used by the large (or ammonia) chain to synthesize carbamoyl phosphate. Tetramer of heterodimers (alpha,beta)4.

It carries out the reaction hydrogencarbonate + L-glutamine + 2 ATP + H2O = carbamoyl phosphate + L-glutamate + 2 ADP + phosphate + 2 H(+). The catalysed reaction is L-glutamine + H2O = L-glutamate + NH4(+). It functions in the pathway amino-acid biosynthesis; L-arginine biosynthesis; carbamoyl phosphate from bicarbonate: step 1/1. The protein operates within pyrimidine metabolism; UMP biosynthesis via de novo pathway; (S)-dihydroorotate from bicarbonate: step 1/3. In terms of biological role, small subunit of the glutamine-dependent carbamoyl phosphate synthetase (CPSase). CPSase catalyzes the formation of carbamoyl phosphate from the ammonia moiety of glutamine, carbonate, and phosphate donated by ATP, constituting the first step of 2 biosynthetic pathways, one leading to arginine and/or urea and the other to pyrimidine nucleotides. The small subunit (glutamine amidotransferase) binds and cleaves glutamine to supply the large subunit with the substrate ammonia. This is Carbamoyl phosphate synthase small chain from Staphylococcus haemolyticus (strain JCSC1435).